The following is a 279-amino-acid chain: Putative ABC transporter ATP-binding protein CA_C1368 (279 aa).

Residues 4–239 form the ABC transporter domain; it reads ISINNVDYIY…KKVLRNINLR (236 aa). Residue 37-44 coordinates ATP; sequence GPNGAGKS.

It belongs to the ABC transporter superfamily.

Its subcellular location is the cell membrane. Its function is as follows. Probably part of an ABC transporter complex. Responsible for energy coupling to the transport system. In Clostridium acetobutylicum (strain ATCC 824 / DSM 792 / JCM 1419 / IAM 19013 / LMG 5710 / NBRC 13948 / NRRL B-527 / VKM B-1787 / 2291 / W), this protein is Putative ABC transporter ATP-binding protein CA_C1368.